A 122-amino-acid polypeptide reads, in one-letter code: UPF0102 protein XOO3839 (122 aa).

The protein belongs to the UPF0102 family.

The polypeptide is UPF0102 protein XOO3839 (Xanthomonas oryzae pv. oryzae (strain KACC10331 / KXO85)).